Reading from the N-terminus, the 1496-residue chain is Chromosome partition protein MukB (1496 aa).

ATP is bound at residue 63–70; that stretch reads GGNGAGKS. 5 coiled-coil regions span residues 328 to 493, 536 to 632, 808 to 832, 861 to 1171, and 1235 to 1291; these read KLEL…QRLS, KMQA…APAW, RAAR…HAER, NPEE…SAEE, and IDAI…LQNI. The interval 694-811 is flexible hinge; sequence PDGSDDVRLN…EVPLFGRAAR (118 aa). The span at 1082–1091 shows a compositional bias: basic and acidic residues; the sequence is RARSRRDELQ. Residues 1082–1101 form a disordered region; sequence RARSRRDELQQRLSQQRSRK.

The protein belongs to the SMC family. MukB subfamily. Homodimerization via its hinge domain. Binds to DNA via its C-terminal region. Interacts, and probably forms a ternary complex, with MukE and MukF via its C-terminal region. The complex formation is stimulated by calcium or magnesium. Interacts with tubulin-related protein FtsZ.

It is found in the cytoplasm. The protein localises to the nucleoid. Functionally, plays a central role in chromosome condensation, segregation and cell cycle progression. Functions as a homodimer, which is essential for chromosome partition. Involved in negative DNA supercoiling in vivo, and by this means organize and compact chromosomes. May achieve or facilitate chromosome segregation by condensation DNA from both sides of a centrally located replisome during cell division. This Actinobacillus pleuropneumoniae serotype 5b (strain L20) protein is Chromosome partition protein MukB.